The primary structure comprises 54 residues: Rubredoxin-1 (54 aa).

In terms of domain architecture, Rubredoxin-like spans 1 to 52; it reads MKKWECVVCGFIYDEAEGLPDEGIEPGTAWNNVPEDWVCPDCGVGKDDFEMV. Residues Cys6, Cys9, Cys39, and Cys42 each contribute to the Fe cation site.

Belongs to the rubredoxin family. Requires Fe(3+) as cofactor.

It localises to the cytoplasm. It functions in the pathway hydrocarbon metabolism; alkane degradation. Its function is as follows. Involved in the hydrocarbon hydroxylating system, which transfers electrons from NADH to rubredoxin reductase and then through rubredoxin to alkane 1 monooxygenase. This is Rubredoxin-1 (rubA) from Alcanivorax borkumensis (strain ATCC 700651 / DSM 11573 / NCIMB 13689 / SK2).